The primary structure comprises 191 residues: Protein GrpE (191 aa).

Positions 1–13 are enriched in basic and acidic residues; the sequence is MSEKKNKKEKLAE. A disordered region spans residues 1 to 40; it reads MSEKKNKKEKLAEEIEQEELNSLDESVETVEEEATEETLT. Positions 14-40 are enriched in acidic residues; it reads EIEQEELNSLDESVETVEEEATEETLT.

The protein belongs to the GrpE family. As to quaternary structure, homodimer.

It is found in the cytoplasm. In terms of biological role, participates actively in the response to hyperosmotic and heat shock by preventing the aggregation of stress-denatured proteins, in association with DnaK and GrpE. It is the nucleotide exchange factor for DnaK and may function as a thermosensor. Unfolded proteins bind initially to DnaJ; upon interaction with the DnaJ-bound protein, DnaK hydrolyzes its bound ATP, resulting in the formation of a stable complex. GrpE releases ADP from DnaK; ATP binding to DnaK triggers the release of the substrate protein, thus completing the reaction cycle. Several rounds of ATP-dependent interactions between DnaJ, DnaK and GrpE are required for fully efficient folding. The sequence is that of Protein GrpE from Listeria innocua serovar 6a (strain ATCC BAA-680 / CLIP 11262).